Reading from the N-terminus, the 67-residue chain is Sec-independent protein translocase protein TatA (67 aa).

Residues 1-21 (MFGLGGQELVLILLIVLLLFG) traverse the membrane as a helical segment.

Belongs to the TatA/E family. Forms a complex with TatC.

It is found in the cell inner membrane. Functionally, part of the twin-arginine translocation (Tat) system that transports large folded proteins containing a characteristic twin-arginine motif in their signal peptide across membranes. TatA could form the protein-conducting channel of the Tat system. This is Sec-independent protein translocase protein TatA from Chlorobaculum tepidum (strain ATCC 49652 / DSM 12025 / NBRC 103806 / TLS) (Chlorobium tepidum).